The following is a 483-amino-acid chain: 6-phosphogluconate dehydrogenase, decarboxylating 1 (483 aa).

NADP(+) contacts are provided by residues 11 to 16 (GLAVMG), 34 to 36 (NRT), 78 to 80 (VKA), and asparagine 106. Substrate is bound by residues asparagine 106 and 132–134 (SGG). The Proton acceptor role is filled by lysine 186. Residue 189–190 (HN) participates in substrate binding. Glutamate 193 (proton donor) is an active-site residue. Substrate-binding residues include tyrosine 194, lysine 264, arginine 291, arginine 454, and histidine 460.

The protein belongs to the 6-phosphogluconate dehydrogenase family. In terms of assembly, homodimer.

It is found in the cytoplasm. It catalyses the reaction 6-phospho-D-gluconate + NADP(+) = D-ribulose 5-phosphate + CO2 + NADPH. The protein operates within carbohydrate degradation; pentose phosphate pathway; D-ribulose 5-phosphate from D-glucose 6-phosphate (oxidative stage): step 3/3. In terms of biological role, catalyzes the oxidative decarboxylation of 6-phosphogluconate to ribulose 5-phosphate and CO(2), with concomitant reduction of NADP to NADPH. The sequence is that of 6-phosphogluconate dehydrogenase, decarboxylating 1 (pgdC) from Spinacia oleracea (Spinach).